The chain runs to 358 residues: DnaJ homolog subfamily B member 11 (358 aa).

An N-terminal signal peptide occupies residues 1–22 (MAPQNLSTFCLLLLYLIGAVIA). The region spanning 25 to 90 (DFYKILGVPR…EKRKQYDTYG (66 aa)) is the J domain. Thr-188 carries the phosphothreonine modification. Asn-261 carries N-linked (GlcNAc...) asparagine glycosylation.

Part of a large chaperone multiprotein complex comprising DNAJB11, HSP90B1, HSPA5, HYOU, PDIA2, PDIA4, PDIA6, PPIB, SDF2L1, UGGT1 and very small amounts of ERP29, but not, or at very low levels, CALR nor CANX. Binds to denatured substrates in an ATP-independent manner. Interacts via the J domain with HSPA5 in an ATP-dependent manner. Contains high-mannose Endo H-sensitive carbohydrates. In terms of processing, cys-169, Cys-171, Cys-193 and Cys-196 form intramolecular disulfide bonds. The preferential partner for each Cys is not known. Post-translationally, thr-188 was reported to be phosphorylated upon DNA damage by ATM or ATR; however as this position has been shown to be in the ER lumen, the in vivo relevance is not proven. In terms of tissue distribution, widely expressed.

The protein localises to the endoplasmic reticulum lumen. As a co-chaperone for HSPA5 it is required for proper folding, trafficking or degradation of proteins. Binds directly to both unfolded proteins that are substrates for ERAD and nascent unfolded peptide chains, but dissociates from the HSPA5-unfolded protein complex before folding is completed. May help recruiting HSPA5 and other chaperones to the substrate. Stimulates HSPA5 ATPase activity. It is necessary for maturation and correct trafficking of PKD1. The chain is DnaJ homolog subfamily B member 11 (DNAJB11) from Homo sapiens (Human).